Reading from the N-terminus, the 179-residue chain is Large ribosomal subunit protein uL15 (179 aa).

This sequence belongs to the universal ribosomal protein uL15 family. As to quaternary structure, part of the 50S ribosomal subunit.

In terms of biological role, binds to the 23S rRNA. The chain is Large ribosomal subunit protein uL15 from Archaeoglobus fulgidus (strain ATCC 49558 / DSM 4304 / JCM 9628 / NBRC 100126 / VC-16).